Here is a 391-residue protein sequence, read N- to C-terminus: Probable inactive allantoicase (391 aa).

It belongs to the allantoicase family.

Functionally, the function of this enzyme is unclear as allantoicase activity is not known to exist in mammals. The sequence is that of Probable inactive allantoicase from Homo sapiens (Human).